A 358-amino-acid chain; its full sequence is DNA replication and repair protein RecF (358 aa).

33–40 provides a ligand contact to ATP; the sequence is GENGAGKT.

The protein belongs to the RecF family.

The protein localises to the cytoplasm. In terms of biological role, the RecF protein is involved in DNA metabolism; it is required for DNA replication and normal SOS inducibility. RecF binds preferentially to single-stranded, linear DNA. It also seems to bind ATP. The sequence is that of DNA replication and repair protein RecF from Deinococcus geothermalis (strain DSM 11300 / CIP 105573 / AG-3a).